The following is a 160-amino-acid chain: UPF0178 protein BB1267 (160 aa).

It belongs to the UPF0178 family.

This is UPF0178 protein BB1267 from Bordetella bronchiseptica (strain ATCC BAA-588 / NCTC 13252 / RB50) (Alcaligenes bronchisepticus).